The chain runs to 165 residues: Transcription elongation factor A protein-like 1 (165 aa).

The tract at residues M1–H101 is disordered. Positions C33–L60 are enriched in acidic residues.

This sequence belongs to the TFS-II family. TFA subfamily.

The protein localises to the nucleus. Functionally, may be involved in transcriptional regulation. Modulates various viral and cellular promoters in a promoter context-dependent manner. Does not bind DNA directly. In Mus musculus (Mouse), this protein is Transcription elongation factor A protein-like 1.